A 169-amino-acid chain; its full sequence is Thaumatin-like pathogenesis-related protein 2 (169 aa).

The first 21 residues, 1 to 21 (MATSSAVLFFLLAVFAAGASA), serve as a signal peptide directing secretion.

This sequence belongs to the thaumatin family.

Functionally, associated with resistance against stem rust fungi. This Avena sativa (Oat) protein is Thaumatin-like pathogenesis-related protein 2 (RASTL-2).